Here is a 313-residue protein sequence, read N- to C-terminus: Aspartate carbamoyltransferase catalytic subunit (313 aa).

Residues arginine 58 and threonine 59 each contribute to the carbamoyl phosphate site. Lysine 86 contacts L-aspartate. Carbamoyl phosphate is bound by residues arginine 108, histidine 136, and glutamine 139. L-aspartate contacts are provided by arginine 169 and arginine 223. Residues glycine 264 and proline 265 each coordinate carbamoyl phosphate.

Belongs to the aspartate/ornithine carbamoyltransferase superfamily. ATCase family. As to quaternary structure, heterododecamer (2C3:3R2) of six catalytic PyrB chains organized as two trimers (C3), and six regulatory PyrI chains organized as three dimers (R2).

The enzyme catalyses carbamoyl phosphate + L-aspartate = N-carbamoyl-L-aspartate + phosphate + H(+). It functions in the pathway pyrimidine metabolism; UMP biosynthesis via de novo pathway; (S)-dihydroorotate from bicarbonate: step 2/3. Functionally, catalyzes the condensation of carbamoyl phosphate and aspartate to form carbamoyl aspartate and inorganic phosphate, the committed step in the de novo pyrimidine nucleotide biosynthesis pathway. The protein is Aspartate carbamoyltransferase catalytic subunit of Halothermothrix orenii (strain H 168 / OCM 544 / DSM 9562).